A 206-amino-acid polypeptide reads, in one-letter code: Large ribosomal subunit protein uL3 (206 aa).

The tract at residues 127 to 151 is disordered; it reads SGGPSSHGSKFHRHLGGTGQATTPA.

Belongs to the universal ribosomal protein uL3 family. As to quaternary structure, part of the 50S ribosomal subunit. Forms a cluster with proteins L14 and L19.

Its function is as follows. One of the primary rRNA binding proteins, it binds directly near the 3'-end of the 23S rRNA, where it nucleates assembly of the 50S subunit. In Borreliella afzelii (strain PKo) (Borrelia afzelii), this protein is Large ribosomal subunit protein uL3.